The primary structure comprises 364 residues: FMNH(2)-dependent dimethylsulfone monooxygenase (364 aa).

It belongs to the SsuD family.

It carries out the reaction dimethyl sulfone + FMNH2 + O2 = methanesulfinate + FMN + formaldehyde + H2O + 2 H(+). Its function is as follows. Involved in the dimethyl sulfide degradation pathway. Catalyzes the oxidation of dimethylsulfone (DMSO2) to yield methanesulfinate, which is oxidized spontaneously to methanesulfonate in the presence of dioxygen and FMNH(2). The chain is FMNH(2)-dependent dimethylsulfone monooxygenase from Pseudomonas fluorescens (strain Pf0-1).